Reading from the N-terminus, the 23-residue chain is Acidic phospholipase A2 Ts-A5 (23 aa).

It depends on Ca(2+) as a cofactor. Post-translationally, contains 7 disulfide bonds. In terms of tissue distribution, expressed by the venom gland.

It is found in the secreted. The catalysed reaction is a 1,2-diacyl-sn-glycero-3-phosphocholine + H2O = a 1-acyl-sn-glycero-3-phosphocholine + a fatty acid + H(+). In terms of biological role, snake venom phospholipase A2 (PLA2) that shows a moderate inhibition of ADP-induced human platelet aggregation when tested on platelet rich plasma. Exhibits high hydrolytic activities and prefers the anionic micelles (dPPC with deoxycholate) to the zwitterionic micelles (dPPC with Triton X-100). PLA2 catalyzes the calcium-dependent hydrolysis of the 2-acyl groups in 3-sn-phosphoglycerides. The sequence is that of Acidic phospholipase A2 Ts-A5 from Trimeresurus stejnegeri (Chinese green tree viper).